Here is a 434-residue protein sequence, read N- to C-terminus: D-amino acid dehydrogenase (434 aa).

3–17 (VLVLGSGVIGTTSAW) contacts FAD.

It belongs to the DadA oxidoreductase family. It depends on FAD as a cofactor.

It carries out the reaction a D-alpha-amino acid + A + H2O = a 2-oxocarboxylate + AH2 + NH4(+). It participates in amino-acid degradation; D-alanine degradation; NH(3) and pyruvate from D-alanine: step 1/1. In terms of biological role, oxidative deamination of D-amino acids. This Stenotrophomonas maltophilia (strain R551-3) protein is D-amino acid dehydrogenase.